Consider the following 101-residue polypeptide: Large ribosomal subunit protein uL24 (101 aa).

Belongs to the universal ribosomal protein uL24 family. As to quaternary structure, part of the 50S ribosomal subunit.

One of two assembly initiator proteins, it binds directly to the 5'-end of the 23S rRNA, where it nucleates assembly of the 50S subunit. Its function is as follows. One of the proteins that surrounds the polypeptide exit tunnel on the outside of the subunit. This Borrelia garinii subsp. bavariensis (strain ATCC BAA-2496 / DSM 23469 / PBi) (Borreliella bavariensis) protein is Large ribosomal subunit protein uL24.